The chain runs to 292 residues: Syntaxin-19 (292 aa).

The span at 1-24 shows a compositional bias: basic and acidic residues; sequence MKDRLPELKQRTKETELSKDKDVP. The tract at residues 1 to 28 is disordered; it reads MKDRLPELKQRTKETELSKDKDVPTTEA. The stretch at 46 to 122 forms a coiled coil; the sequence is VAERHLHEIQ…VKEVKKSEDE (77 aa). The 63-residue stretch at 209 to 271 folds into the t-SNARE coiled-coil homology domain; the sequence is LSEIEQRHKE…NTTKEKFGLA (63 aa).

Belongs to the syntaxin family. Interacts with EGFR.

It is found in the cell membrane. The protein resides in the cytoplasm. Its function is as follows. Plays a role in endosomal trafficking of the epidermal growth factor receptor (EGFR). The polypeptide is Syntaxin-19 (STX19) (Bos taurus (Bovine)).